The sequence spans 376 residues: N-acetyldiaminopimelate deacetylase (376 aa).

D70 is a catalytic residue. E129 (proton acceptor) is an active-site residue.

Belongs to the peptidase M20A family. N-acetyldiaminopimelate deacetylase subfamily.

It catalyses the reaction N-acetyl-(2S,6S)-2,6-diaminopimelate + H2O = (2S,6S)-2,6-diaminopimelate + acetate. It participates in amino-acid biosynthesis; L-lysine biosynthesis via DAP pathway; LL-2,6-diaminopimelate from (S)-tetrahydrodipicolinate (acetylase route): step 3/3. In terms of biological role, catalyzes the conversion of N-acetyl-diaminopimelate to diaminopimelate and acetate. The sequence is that of N-acetyldiaminopimelate deacetylase from Bacillus pumilus (strain SAFR-032).